A 783-amino-acid chain; its full sequence is Aconitate hydratase, mitochondrial (783 aa).

The transit peptide at 1-25 directs the protein to the mitochondrion; that stretch reads MITTRLARMGALAPKSRLLFGTRGM. Substrate-binding positions include Gln102 and 195–197; that span reads DSH. Positions 388, 451, and 454 each coordinate [4Fe-4S] cluster. 2 residues coordinate substrate: Arg477 and Arg482. Residues 524–555 are disordered; that stretch reads EFKLKAPTGDGLPSRGYDPGRDTYQAPPTDRS. Substrate is bound by residues Arg610 and 673 to 674; that span reads SR.

This sequence belongs to the aconitase/IPM isomerase family. [4Fe-4S] cluster serves as cofactor.

The protein resides in the mitochondrion. It carries out the reaction citrate = D-threo-isocitrate. The catalysed reaction is (2R)-homocitrate = cis-homoaconitate + H2O. It participates in carbohydrate metabolism; tricarboxylic acid cycle; isocitrate from oxaloacetate: step 2/2. Its pathway is amino-acid biosynthesis; L-lysine biosynthesis via AAA pathway; L-alpha-aminoadipate from 2-oxoglutarate: step 2/5. Its function is as follows. Catalyzes the isomerization of citrate to isocitrate via cis-aconitate, a step in the citric acid cycle. Also catalyzes the reversible dehydration of (R)-homocitrate to cis-homoaconitate, a step in the alpha-aminoadipate pathway for lysine biosynthesis. The sequence is that of Aconitate hydratase, mitochondrial (acoA) from Emericella nidulans (strain FGSC A4 / ATCC 38163 / CBS 112.46 / NRRL 194 / M139) (Aspergillus nidulans).